We begin with the raw amino-acid sequence, 171 residues long: LIM domain transcription factor LMO4-B (171 aa).

Residues 1–19 are compositionally biased toward polar residues; it reads MVNNRISESTTTAVSNNGS. The tract at residues 1–20 is disordered; that stretch reads MVNNRISESTTTAVSNNGSP. LIM zinc-binding domains are found at residues 22–84 and 86–148; these read KACA…LFGN and GACN…GLLN.

Functionally, acts as a positive cofactor of GATA transcription factors to establish the identity of the ventral mesoderm during gastrulation. Down-regulation in the dorsal mesoderm is necessary for the proper formation of this territory since, when present, lmo4 may bind ldb1 and restrict the availability of this cofactor for Spemman organizer transcription factors. At neurula stages, suppresses primary neuron differentiation and modulates gene expression at the Isthmic Organizer of the midbrain-hindbrain boundary. This chain is LIM domain transcription factor LMO4-B (lmo4-b), found in Xenopus laevis (African clawed frog).